The sequence spans 301 residues: Ribonuclease HIII (301 aa).

The RNase H type-2 domain maps to Thr90 to Lys301. Residues Asp96, Glu97, and Asp198 each contribute to the a divalent metal cation site.

It belongs to the RNase HII family. RnhC subfamily. Mn(2+) is required as a cofactor. Mg(2+) serves as cofactor.

It is found in the cytoplasm. It carries out the reaction Endonucleolytic cleavage to 5'-phosphomonoester.. Endonuclease that specifically degrades the RNA of RNA-DNA hybrids. This chain is Ribonuclease HIII, found in Protochlamydia amoebophila (strain UWE25).